The following is a 394-amino-acid chain: Upstream-binding factor 1-like protein 1 (394 aa).

A DNA-binding region (HMG box 1) is located at residues 101–169 (PKRPLTAYLR…DFQKKMRQFK (69 aa)). The span at 167 to 180 (QFKKRHPVSGHPKK) shows a compositional bias: basic residues. Residues 167-197 (QFKKRHPVSGHPKKSVVPQSHPTKVPTKSQG) form a disordered region. A compositionally biased stretch (polar residues) spans 183–197 (VPQSHPTKVPTKSQG). Positions 225–291 (RKPPMNAYHK…QYRVKLDLWL (67 aa)) form a DNA-binding region, HMG box 2. A disordered region spans residues 305 to 394 (AKATCGKRKN…SDSSSTDEDD (90 aa)).

It localises to the cytoplasm. It is found in the nucleus. Its function is as follows. Essential for proliferation of the inner cell mass and trophectodermal cells in peri-implantation development. The protein is Upstream-binding factor 1-like protein 1 of Mus musculus (Mouse).